A 486-amino-acid polypeptide reads, in one-letter code: Glutamyl-tRNA(Gln) amidotransferase subunit A (486 aa).

Catalysis depends on charge relay system residues K77 and S152. S176 (acyl-ester intermediate) is an active-site residue.

Belongs to the amidase family. GatA subfamily. In terms of assembly, heterotrimer of A, B and C subunits.

It carries out the reaction L-glutamyl-tRNA(Gln) + L-glutamine + ATP + H2O = L-glutaminyl-tRNA(Gln) + L-glutamate + ADP + phosphate + H(+). Its function is as follows. Allows the formation of correctly charged Gln-tRNA(Gln) through the transamidation of misacylated Glu-tRNA(Gln) in organisms which lack glutaminyl-tRNA synthetase. The reaction takes place in the presence of glutamine and ATP through an activated gamma-phospho-Glu-tRNA(Gln). This chain is Glutamyl-tRNA(Gln) amidotransferase subunit A, found in Pediococcus pentosaceus (strain ATCC 25745 / CCUG 21536 / LMG 10740 / 183-1w).